We begin with the raw amino-acid sequence, 472 residues long: Argininosuccinate lyase (472 aa).

The protein belongs to the lyase 1 family. Argininosuccinate lyase subfamily.

It is found in the cytoplasm. It catalyses the reaction 2-(N(omega)-L-arginino)succinate = fumarate + L-arginine. It participates in amino-acid biosynthesis; L-arginine biosynthesis; L-arginine from L-ornithine and carbamoyl phosphate: step 3/3. The chain is Argininosuccinate lyase from Rhodococcus opacus (strain B4).